The chain runs to 438 residues: Aspartate--tRNA(Asp/Asn) ligase (438 aa).

Glu-176 contributes to the L-aspartate binding site. The segment at 198-201 (QLYK) is aspartate. Residue Arg-220 coordinates L-aspartate. ATP contacts are provided by residues 220–222 (RAE), 228–230 (RHL), and Glu-361. Positions 361 and 364 each coordinate Mg(2+). 2 residues coordinate L-aspartate: Ser-364 and Arg-368. 409–412 (GADR) provides a ligand contact to ATP.

It belongs to the class-II aminoacyl-tRNA synthetase family. Type 2 subfamily. In terms of assembly, homodimer. It depends on Mg(2+) as a cofactor.

It localises to the cytoplasm. The enzyme catalyses tRNA(Asx) + L-aspartate + ATP = L-aspartyl-tRNA(Asx) + AMP + diphosphate. Its function is as follows. Aspartyl-tRNA synthetase with relaxed tRNA specificity since it is able to aspartylate not only its cognate tRNA(Asp) but also tRNA(Asn). Reaction proceeds in two steps: L-aspartate is first activated by ATP to form Asp-AMP and then transferred to the acceptor end of tRNA(Asp/Asn). This is Aspartate--tRNA(Asp/Asn) ligase from Methanococcus maripaludis (strain DSM 14266 / JCM 13030 / NBRC 101832 / S2 / LL).